The sequence spans 235 residues: 2,3,4,5-tetrahydropyridine-2,6-dicarboxylate N-acetyltransferase (235 aa).

It belongs to the transferase hexapeptide repeat family. DapH subfamily.

It catalyses the reaction (S)-2,3,4,5-tetrahydrodipicolinate + acetyl-CoA + H2O = L-2-acetamido-6-oxoheptanedioate + CoA. It participates in amino-acid biosynthesis; L-lysine biosynthesis via DAP pathway; LL-2,6-diaminopimelate from (S)-tetrahydrodipicolinate (acetylase route): step 1/3. Its function is as follows. Catalyzes the transfer of an acetyl group from acetyl-CoA to tetrahydrodipicolinate. This chain is 2,3,4,5-tetrahydropyridine-2,6-dicarboxylate N-acetyltransferase, found in Anoxybacillus flavithermus (strain DSM 21510 / WK1).